The sequence spans 81 residues: MGITKTSVTFLFLLILAAFVSNYNVLASEIKPTGRIDDQCKQMCSATYGDGKCASDCRKAGFSSGRCLTSSPFGNKCCCTK.

The first 27 residues, 1 to 27 (MGITKTSVTFLFLLILAAFVSNYNVLA), serve as a signal peptide directing secretion. Intrachain disulfides connect cysteine 40–cysteine 79, cysteine 44–cysteine 67, cysteine 53–cysteine 77, and cysteine 57–cysteine 78.

The protein belongs to the DEFL family.

The protein localises to the secreted. The protein is Defensin-like protein 43 of Arabidopsis thaliana (Mouse-ear cress).